Reading from the N-terminus, the 502-residue chain is Aspartyl/glutamyl-tRNA(Asn/Gln) amidotransferase subunit B (502 aa).

Belongs to the GatB/GatE family. GatB subfamily. In terms of assembly, heterotrimer of A, B and C subunits.

It catalyses the reaction L-glutamyl-tRNA(Gln) + L-glutamine + ATP + H2O = L-glutaminyl-tRNA(Gln) + L-glutamate + ADP + phosphate + H(+). It carries out the reaction L-aspartyl-tRNA(Asn) + L-glutamine + ATP + H2O = L-asparaginyl-tRNA(Asn) + L-glutamate + ADP + phosphate + 2 H(+). In terms of biological role, allows the formation of correctly charged Asn-tRNA(Asn) or Gln-tRNA(Gln) through the transamidation of misacylated Asp-tRNA(Asn) or Glu-tRNA(Gln) in organisms which lack either or both of asparaginyl-tRNA or glutaminyl-tRNA synthetases. The reaction takes place in the presence of glutamine and ATP through an activated phospho-Asp-tRNA(Asn) or phospho-Glu-tRNA(Gln). In Ruegeria sp. (strain TM1040) (Silicibacter sp.), this protein is Aspartyl/glutamyl-tRNA(Asn/Gln) amidotransferase subunit B.